The primary structure comprises 289 residues: F-box protein PP2-B15 (289 aa).

The F-box domain occupies 1 to 43 (MMLPEACVATILSFTTPADTISSAAVSSVFRVAGDSDFVWEKF).

In Arabidopsis thaliana (Mouse-ear cress), this protein is F-box protein PP2-B15 (PP2B15).